The following is a 1262-amino-acid chain: Clustered mitochondria protein homolog (1262 aa).

Residues 1–47 are disordered; the sequence is MTSGSELKAEVDAPVVNGKDELVHEEDNNDSGHSSINTPDASEDKQT. The span at 31 to 40 shows a compositional bias: polar residues; that stretch reads SGHSSINTPD. Residues 335 to 580 enclose the Clu domain; the sequence is AIELIEPFRV…RSMPPDVHYL (246 aa).

This sequence belongs to the CLU family.

The protein localises to the cytoplasm. Its function is as follows. mRNA-binding protein involved in proper cytoplasmic distribution of mitochondria. In Caenorhabditis briggsae, this protein is Clustered mitochondria protein homolog.